Reading from the N-terminus, the 441-residue chain is Putative transporter AmpG 1 (441 aa).

The next 12 helical transmembrane spans lie at 5–25 (SHLL…MITG), 42–62 (IGIL…APIF), 78–98 (LSWI…FSFL), 104–124 (LVLF…QDTI), 143–163 (GIYI…AIYL), 171–191 (EIYK…IVAA), 249–269 (SGND…LVLY), 297–317 (VGKF…GFIM), 325–345 (SIFL…FLEI), 352–372 (LLFI…TAYI), 390–410 (FLSS…GYMV), and 413–433 (FGWQ…LLIL).

The protein belongs to the major facilitator superfamily.

It is found in the cell inner membrane. The polypeptide is Putative transporter AmpG 1 (ampG1) (Rickettsia felis (strain ATCC VR-1525 / URRWXCal2) (Rickettsia azadi)).